A 2224-amino-acid polypeptide reads, in one-letter code: MFPGCPRLWVLVVLGTSWVGWGSQGTEAAQLRQFYVAAQGISWSYRPEPTNSSLNLSVTSFKKIVYREYEPYFKKEKPQSTISGLLGPTLYAEVGDIIKVHFKNKADKPLSIHPQGIRYSKLSEGASYLDHTFPAEKMDDAVAPGREYTYEWSISEDSGPTHDDPPCLTHIYYSHENLIEDFNSGLIGPLLICKKGTLTEGGTQKTFDKQIVLLFAVFDESKSWSQSSSLMYTVNGYVNGTMPDITVCAHDHISWHLLGMSSGPELFSIHFNGQVLEQNHHKVSAITLVSATSTTANMTVGPEGKWIISSLTPKHLQAGMQAYIDIKNCPKKTRNLKKITREQRRHMKRWEYFIAAEEVIWDYAPVIPANMDKKYRSQHLDNFSNQIGKHYKKVMYTQYEDESFTKHTVNPNMKEDGILGPIIRAQVRDTLKIVFKNMASRPYSIYPHGVTFSPYEDEVNSSFTSGRNNTMIRAVQPGETYTYKWNILEFDEPTENDAQCLTRPYYSDVDIMRDIASGLIGLLLICKSRSLDRRGIQRAADIEQQAVFAVFDENKSWYLEDNINKFCENPDEVKRDDPKFYESNIMSTINGYVPESITTLGFCFDDTVQWHFCSVGTQNEILTIHFTGHSFIYGKRHEDTLTLFPMRGESVTVTMDNVGTWMLTSMNSSPRSKKLRLKFRDVKCIPDDDEDSYEIFEPPESTVMATRKMHDRLEPEDEESDADYDYQNRLAAALGIRSFRNSSLNQEEEEFNLTALALENGTEFVSSNTDIIVGSNYSSPSNISKFTVNNLAEPQKAPSHQQATTAGSPLRHLIGKNSVLNSSTAEHSSPYSEDPIEDPLQPDVTGIRLLSLGAGEFKSQEHAKHKGPKVERDQAAKHRFSWMKLLAHKVGRHLSQDTGSPSGMRPWEDLPSQDTGSPSRMRPWKDPPSDLLLLKQSNSSKILVGRWHLASEKGSYEIIQDTDEDTAVNNWLISPQNASRAWGESTPLANKPGKQSGHPKFPRVRHKSLQVRQDGGKSRLKKSQFLIKTRKKKKEKHTHHAPLSPRTFHPLRSEAYNTFSERRLKHSLVLHKSNETSLPTDLNQTLPSMDFGWIASLPDHNQNSSNDTGQASCPPGLYQTVPPEEHYQTFPIQDPDQMHSTSDPSHRSSSPELSEMLEYDRSHKSFPTDISQMSPSSEHEVWQTVISPDLSQVTLSPELSQTNLSPDLSHTTLSPELIQRNLSPALGQMPISPDLSHTTLSPDLSHTTLSLDLSQTNLSPELSQTNLSPALGQMPLSPDLSHTTLSLDFSQTNLSPELSHMTLSPELSQTNLSPALGQMPISPDLSHTTLSLDFSQTNLSPELSQTNLSPALGQMPLSPDPSHTTLSLDLSQTNLSPELSQTNLSPDLSEMPLFADLSQIPLTPDLDQMTLSPDLGETDLSPNFGQMSLSPDLSQVTLSPDISDTTLLPDLSQISPPPDLDQIFYPSESSQSLLLQEFNESFPYPDLGQMPSPSSPTLNDTFLSKEFNPLVIVGLSKDGTDYIEIIPKEEVQSSEDDYAEIDYVPYDDPYKTDVRTNINSSRDPDNIAAWYLRSNNGNRRNYYIAAEEISWDYSEFVQRETDIEDSDDIPEDTTYKKVVFRKYLDSTFTKRDPRGEYEEHLGILGPIIRAEVDDVIQVRFKNLASRPYSLHAHGLSYEKSSEGKTYEDDSPEWFKEDNAVQPNSSYTYVWHATERSGPESPGSACRAWAYYSAVNPEKDIHSGLIGPLLICQKGILHKDSNMPMDMREFVLLFMTFDEKKSWYYEKKSRSSWRLTSSEMKKSHEFHAINGMIYSLPGLKMYEQEWVRLHLLNIGGSQDIHVVHFHGQTLLENGNKQHQLGVWPLLPGSFKTLEMKASKPGWWLLNTEVGENQRAGMQTPFLIMDRDCRMPMGLSTGIISDSQIKASEFLGYWEPRLARLNNGGSYNAWSVEKLAAEFASKPWIQVDMQKEVIITGIQTQGAKHYLKSCYTTEFYVAYSSNQINWQIFKGNSTRNVMYFNGNSDASTIKENQFDPPIVARYIRISPTRAYNRPTLRLELQGCEVNGCSTPLGMENGKIENKQITASSFKKSWWGDYWEPFRARLNAQGRVNAWQAKANNNKQWLEIDLLKIKKITAIITQGCKSLSSEMYVKSYTIHYSEQGVEWKPYRLKSSMVDKIFEGNTNTKGHVKNFFNPPIISRFIRVIPKTWNQSIALRLELFGCDIY.

A signal peptide spans 1-28 (MFPGCPRLWVLVVLGTSWVGWGSQGTEA). Plastocyanin-like domains follow at residues 30–193 (QLRQ…LLIC), 203–329 (TQKT…IKNC), 348–526 (KRWE…LLIC), and 536–684 (IQRA…DVKC). F5/8 type A domains are found at residues 30–329 (QLRQ…IKNC) and 348–684 (KRWE…DVKC). N-linked (GlcNAc...) asparagine glycosylation is found at Asn51 and Asn55. Residues Asp139 and Asp140 each contribute to the Ca(2+) site. Cys167 and Cys193 are oxidised to a cystine. 5 N-linked (GlcNAc...) asparagine glycosylation sites follow: Asn239, Asn297, Asn382, Asn460, and Asn468. Cys248 and Cys329 are oxidised to a cystine. Cys500 and Cys526 are disulfide-bonded. Asn554 carries an N-linked (GlcNAc...) asparagine glycan. Cys603 and Cys684 are disulfide-bonded. The residue at position 640 (Thr640) is a Phosphothreonine. The segment at 692–1573 (SYEIFEPPES…PDNIAAWYLR (882 aa)) is b. A sulfotyrosine mark is found at Tyr693, Tyr724, and Tyr726. A propeptide spans 738–1573 (SFRNSSLNQE…PDNIAAWYLR (836 aa)) (activation peptide (connecting region)). N-linked (GlcNAc...) asparagine glycosylation is found at Asn741, Asn752, Asn760, Asn776, and Asn782. Thr805 carries O-linked (GalNAc...) threonine glycosylation. N-linked (GlcNAc...) asparagine glycosylation occurs at Asn821. Residues 822 to 831 (SSTAEHSSPY) are compositionally biased toward polar residues. The disordered stretch occupies residues 822-842 (SSTAEHSSPYSEDPIEDPLQP). A Phosphoserine; by FAM20C modification is found at Ser859. A disordered region spans residues 894 to 927 (LSQDTGSPSGMRPWEDLPSQDTGSPSRMRPWKDP). 2 consecutive repeat copies span residues 895–911 (SQDTGSPSGMRPWEDLP) and 912–928 (SQDTGSPSRMRPWKDPP). Positions 895 to 928 (SQDTGSPSGMRPWEDLPSQDTGSPSRMRPWKDPP) are 2 X 17 AA tandem repeats. Residues Asn938 and Asn977 are each glycosylated (N-linked (GlcNAc...) asparagine). Disordered regions lie at residues 982–1001 (WGESTPLANKPGKQSGHPKF) and 1029–1048 (TRKKKKEKHTHHAPLSPRTF). Positions 1029 to 1040 (TRKKKKEKHTHH) are enriched in basic residues. 4 N-linked (GlcNAc...) asparagine glycosylation sites follow: Asn1074, Asn1083, Asn1103, and Asn1106. The segment at 1097-1157 (LPDHNQNSSN…SSSPELSEML (61 aa)) is disordered. Residues 1099–1111 (DHNQNSSNDTGQA) are compositionally biased toward polar residues. Positions 1139–1154 (HSTSDPSHRSSSPELS) are enriched in low complexity. A run of 35 repeats spans residues 1185–1193 (VISPDLSQV), 1194–1202 (TLSPELSQT), 1203–1211 (NLSPDLSHT), 1212–1220 (TLSPELIQR), 1221–1229 (NLSPALGQM), 1230–1238 (PISPDLSHT), 1239–1247 (TLSPDLSHT), 1248–1256 (TLSLDLSQT), 1257–1265 (NLSPELSQT), 1266–1274 (NLSPALGQM), 1275–1283 (PLSPDLSHT), 1284–1292 (TLSLDFSQT), 1293–1301 (NLSPELSHM), 1302–1310 (TLSPELSQT), 1311–1319 (NLSPALGQM), 1320–1328 (PISPDLSHT), 1329–1337 (TLSLDFSQT), 1338–1346 (NLSPELSQT), 1347–1355 (NLSPALGQM), 1356–1364 (PLSPDPSHT), 1365–1373 (TLSLDLSQT), 1374–1382 (NLSPELSQT), 1383–1391 (NLSPDLSEM), 1392–1400 (PLFADLSQI), 1401–1409 (PLTPDLDQM), 1410–1418 (TLSPDLGET), 1419–1427 (DLSPNFGQM), 1428–1436 (SLSPDLSQV), 1437–1445 (TLSPDISDT), 1446–1454 (TLLPDLSQI), 1455–1463 (SPPPDLDQI), 1464–1472 (FYPSESSQS), 1473–1481 (LLLQEFNES), 1482–1490 (FPYPDLGQM), and 1493–1501 (PSSPTLNDT). Residues 1185 to 1501 (VISPDLSQVT…SPSSPTLNDT (317 aa)) form a 35 X 9 AA approximate tandem repeats of [TNP]-L-S-P-D-L-S-Q-T region. The disordered stretch occupies residues 1341–1367 (PELSQTNLSPALGQMPLSPDPSHTTLS). Asn1479 is a glycosylation site (N-linked (GlcNAc...) asparagine). Residue Asn1499 is glycosylated (N-linked (GlcNAc...) asparagine). 3 positions are modified to sulfotyrosine: Tyr1522, Tyr1538, and Tyr1543. A glycan (N-linked (GlcNAc...) asparagine) is linked at Asn1559. 2 Plastocyanin-like domains span residues 1578–1751 (NRRN…LLIC) and 1761–1907 (NMPM…DRDC). The F5/8 type A 3 domain occupies 1578–1907 (NRRNYYIAAE…TPFLIMDRDC (330 aa)). Tyr1593 carries the sulfotyrosine modification. Asn1703 is a glycosylation site (N-linked (GlcNAc...) asparagine). The cysteines at positions 1725 and 1751 are disulfide-linked. The Cu cation site is built by His1843 and His1845. 2 disulfide bridges follow: Cys1907–Cys2061 and Cys2066–Cys2221. F5/8 type C domains are found at residues 1907–2061 (CRMP…LQGC) and 2066–2221 (CSTP…LFGC). Residues Asn2010 and Asn2209 are each glycosylated (N-linked (GlcNAc...) asparagine).

This sequence belongs to the multicopper oxidase family. In terms of assembly, factor Va, the activated form of factor V, is composed of a heavy chain and a light chain, non-covalently bound. The interaction between the two chains is calcium-dependent. Forms heterodimer with SERPINA5. Post-translationally, thrombin activates factor V proteolytically to the active cofactor, factor Va (formation of a heavy chain at the N-terminus and a light chain at the C-terminus). Sulfation is required for efficient thrombin cleavage and activation and for full procoagulant activity. In terms of processing, activated protein C inactivates factor V and factor Va by proteolytic degradation. Post-translationally, phosphorylated by FAM20C in the extracellular medium. In terms of tissue distribution, plasma.

It is found in the secreted. Inhibited by SERPINA5. Functionally, central regulator of hemostasis. It serves as a critical cofactor for the prothrombinase activity of factor Xa that results in the activation of prothrombin to thrombin. The protein is Coagulation factor V (F5) of Homo sapiens (Human).